A 361-amino-acid chain; its full sequence is Anthranilate phosphoribosyltransferase (361 aa).

5-phospho-alpha-D-ribose 1-diphosphate is bound by residues G101, 104–105 (GD), T109, 111–114 (NIST), 129–137 (KHGNRGVSS), and S141. G101 is an anthranilate binding site. S113 contributes to the Mg(2+) binding site. Position 132 (N132) interacts with anthranilate. R187 contributes to the anthranilate binding site. Positions 245 and 246 each coordinate Mg(2+).

The protein belongs to the anthranilate phosphoribosyltransferase family. In terms of assembly, homodimer. Requires Mg(2+) as cofactor.

It carries out the reaction N-(5-phospho-beta-D-ribosyl)anthranilate + diphosphate = 5-phospho-alpha-D-ribose 1-diphosphate + anthranilate. It participates in amino-acid biosynthesis; L-tryptophan biosynthesis; L-tryptophan from chorismate: step 2/5. Functionally, catalyzes the transfer of the phosphoribosyl group of 5-phosphorylribose-1-pyrophosphate (PRPP) to anthranilate to yield N-(5'-phosphoribosyl)-anthranilate (PRA). In Shewanella denitrificans (strain OS217 / ATCC BAA-1090 / DSM 15013), this protein is Anthranilate phosphoribosyltransferase.